Consider the following 441-residue polypeptide: Amino-acid acetyltransferase (441 aa).

Residues 295 to 434 (EQVRRATIND…QALYNYQRRS (140 aa)) form the N-acetyltransferase domain.

This sequence belongs to the acetyltransferase family. ArgA subfamily. Homohexamer.

Its subcellular location is the cytoplasm. The catalysed reaction is L-glutamate + acetyl-CoA = N-acetyl-L-glutamate + CoA + H(+). It functions in the pathway amino-acid biosynthesis; L-arginine biosynthesis; N(2)-acetyl-L-ornithine from L-glutamate: step 1/4. The sequence is that of Amino-acid acetyltransferase from Pectobacterium atrosepticum (strain SCRI 1043 / ATCC BAA-672) (Erwinia carotovora subsp. atroseptica).